A 391-amino-acid polypeptide reads, in one-letter code: Serpin-ZX (391 aa).

The interval 337–361 is RCL; sequence GTEAAAASAGVIKLRGLLMEEDEID. A glycan (N-linked (GlcNAc...) asparagine) is linked at N375.

This sequence belongs to the serpin family. As to quaternary structure, interacts with RD21A. In terms of tissue distribution, expressed in root tips. Expressed in siliques (at protein level).

It is found in the secreted. It localises to the extracellular space. Its subcellular location is the apoplast. The protein localises to the cytoplasm. Inhibits metacaspase-9 (MC9) cysteine protease. Functions through cleavage of its reactive center loop and covalent binding to MC9. Involved in the control of elicitor-stimulated programmed cell death (PCD). During infection by the necrotrophic fungal pathogen Botrytis cinerea, functions to protect cells by limiting the PCD-promoting protease RD21A activity that is released from the ER body or vacuole to the cytoplasm. Involved in the control of water stress-induced cell death by limiting the pro-death protease RD21A activity that is released from the vacuole to the cytoplasm. This Arabidopsis thaliana (Mouse-ear cress) protein is Serpin-ZX.